Here is a 214-residue protein sequence, read N- to C-terminus: Transcription factor 23 (214 aa).

2 disordered regions span residues 1–86 (MSQR…ARER) and 174–214 (DSTT…LGDK). Residues 40–49 (TRQDPWEERS) show a composition bias toward basic and acidic residues. The region spanning 76 to 128 (EASPENAARERSRVRTLRQAFLALQAALPAVPPDTKLSKLDVLVLAASYIAHL) is the bHLH domain. Residues 174 to 183 (DSTTASTPSQ) are compositionally biased toward polar residues.

In terms of assembly, forms inactive heterodimeric complexes with TCF3. Expressed in liver, kidney and spleen.

The protein resides in the nucleus. Its function is as follows. Inhibits E-box-mediated binding and transactivation of bHLH factors. Inhibitory effect is similar to that of ID proteins. Inhibits the formation of TCF3 and MYOD1 homodimers and heterodimers. Lacks DNA binding activity. Seems to play a role in the inhibition of myogenesis. This Homo sapiens (Human) protein is Transcription factor 23 (TCF23).